Reading from the N-terminus, the 316-residue chain is L-lactate dehydrogenase 3 (316 aa).

Positions 16, 37, 42, and 68 each coordinate NAD(+). A substrate-binding site is contributed by arginine 91. Residues serine 104, 121–123 (ASN), and threonine 146 each bind NAD(+). Residue 123 to 126 (NPVD) participates in substrate binding. 151–154 (DSSR) provides a ligand contact to substrate. The beta-D-fructose 1,6-bisphosphate site is built by arginine 156 and histidine 171. Histidine 178 (proton acceptor) is an active-site residue. Substrate is bound at residue threonine 233.

Belongs to the LDH/MDH superfamily. LDH family. In terms of assembly, homotetramer.

It localises to the cytoplasm. The catalysed reaction is (S)-lactate + NAD(+) = pyruvate + NADH + H(+). It participates in fermentation; pyruvate fermentation to lactate; (S)-lactate from pyruvate: step 1/1. With respect to regulation, allosterically activated by fructose 1,6-bisphosphate (FBP). Catalyzes the conversion of lactate to pyruvate. The polypeptide is L-lactate dehydrogenase 3 (Bacillus thuringiensis subsp. konkukian (strain 97-27)).